A 118-amino-acid polypeptide reads, in one-letter code: Small ribosomal subunit protein uS13 (118 aa).

The tract at residues 94 to 118 (SLPLRGQRTKTNARTRKGPRKPIKK) is disordered.

It belongs to the universal ribosomal protein uS13 family. Part of the 30S ribosomal subunit. Forms a loose heterodimer with protein S19. Forms two bridges to the 50S subunit in the 70S ribosome.

In terms of biological role, located at the top of the head of the 30S subunit, it contacts several helices of the 16S rRNA. In the 70S ribosome it contacts the 23S rRNA (bridge B1a) and protein L5 of the 50S subunit (bridge B1b), connecting the 2 subunits; these bridges are implicated in subunit movement. Contacts the tRNAs in the A and P-sites. This Vibrio cholerae serotype O1 (strain ATCC 39315 / El Tor Inaba N16961) protein is Small ribosomal subunit protein uS13.